We begin with the raw amino-acid sequence, 527 residues long: Rhesus-like glycoprotein A (527 aa).

Topologically, residues 1–18 (MTHNDDDHKWVTTKRKEP) are cytoplasmic. Residues 19 to 39 (IFFTVILFIFQIFMIICFAAL) traverse the membrane as a helical segment. Over 40–70 (TGYDTNKNYTGSENPDEFKGGEVQERVNNFY) the chain is Extracellular. An N-linked (GlcNAc...) asparagine glycan is attached at Asn-47. The helical transmembrane segment at 71–91 (GYFRDINIMIFFGFGFLMTFL) threads the bilayer. Residues 92–99 (RRYGYSAL) lie on the Cytoplasmic side of the membrane. Residues 100–120 (GYTFIISALVSQWSVLLNGFF) traverse the membrane as a helical segment. Topologically, residues 121-141 (EAWSHSNKHGEFPSTWEFSMD) are extracellular. Residues 142 to 162 (SLLQGFFCSGSVMISYGAILG) traverse the membrane as a helical segment. Residues 163-166 (RVTP) are Cytoplasmic-facing. The chain crosses the membrane as a helical span at residues 167-187 (LHMLIMGIIEPIFFFLNVFIG). The Extracellular portion of the chain corresponds to 188–195 (EMNLEAID). The chain crosses the membrane as a helical span at residues 196 to 216 (VGGGMYIHLFGSVFGLTVAWF). The Cytoplasmic segment spans residues 217-236 (LTDRKSKECTDNAPSYSGDN). A helical membrane pass occupies residues 237 to 257 (FAMAGTLFLWMMWPSFNAAIA). Over 258-263 (PLGEPQ) the chain is Extracellular. The chain crosses the membrane as a helical span at residues 264 to 284 (FRAIANTFLSLTGSTVATFIV). Residues 285–299 (SRLFSHLGNKLDMVH) lie on the Cytoplasmic side of the membrane. The chain crosses the membrane as a helical span at residues 300–319 (VQNSSLAGGVVQGCIAHMNI). Residues 320-321 (NP) lie on the Extracellular side of the membrane. A helical membrane pass occupies residues 322 to 342 (GGAIAMGFIAGTISVCGYLFI). At 343–357 (TPKVQRKLHIQDTCG) the chain is on the cytoplasmic side. A helical transmembrane segment spans residues 358–378 (ILNLHCIPGFLGSIAAIFAAI). Over 379–406 (KGLNNPNMYSKVEFEQIFRAGDSQASAN) the chain is Extracellular. The chain crosses the membrane as a helical span at residues 407–427 (LIATMVSIGLGIVGGLLVGVI). At 428-527 (LLQLKKIKGL…EEDEFKQEPI (100 aa)) the chain is on the cytoplasmic side. The disordered stretch occupies residues 471-527 (SEDTAGGDDEEEGVGKEHGAVEMGKHNRIVQPKQDNKYHKQLPSDDEEEDEFKQEPI). The span at 483 to 495 (GVGKEHGAVEMGK) shows a compositional bias: basic and acidic residues. Residues 514 to 527 (SDDEEEDEFKQEPI) are compositionally biased toward acidic residues.

The protein belongs to the ammonium transporter (TC 2.A.49) family. Rh subfamily. In terms of assembly, interacts with ap1g1.

The protein localises to the contractile vacuole. Its subcellular location is the membrane. Functionally, may be a carbon dioxide/bicarbonate transporter. This chain is Rhesus-like glycoprotein A (rhgA), found in Dictyostelium discoideum (Social amoeba).